The sequence spans 183 residues: MIIKPDDRWRWYFDDEQQKLMLDLANGMIFRSRFPSKMLSATAHQSSPFTVDDAALYYGYDEQIRQIDMPSESRAELALNALIAHRFLKPLMPKSWYFEVSHSSTRPYLAQVVETALKDSNEKVLFLVAEVGEQACLCLLAQPQLALFDRTLTFCDPLKIMNDRLSEYHKQSEPRSFLYEKVI.

The protein belongs to the ZapC family. Interacts directly with FtsZ.

It localises to the cytoplasm. In terms of biological role, contributes to the efficiency of the cell division process by stabilizing the polymeric form of the cell division protein FtsZ. Acts by promoting interactions between FtsZ protofilaments and suppressing the GTPase activity of FtsZ. The protein is Cell division protein ZapC of Proteus mirabilis (strain HI4320).